The following is a 346-amino-acid chain: Uroporphyrinogen decarboxylase (346 aa).

Substrate-binding positions include 23-27 (RQAGR), D73, Y151, S206, and H321.

Belongs to the uroporphyrinogen decarboxylase family. As to quaternary structure, homodimer.

Its subcellular location is the cytoplasm. The catalysed reaction is uroporphyrinogen III + 4 H(+) = coproporphyrinogen III + 4 CO2. It participates in porphyrin-containing compound metabolism; protoporphyrin-IX biosynthesis; coproporphyrinogen-III from 5-aminolevulinate: step 4/4. Functionally, catalyzes the decarboxylation of four acetate groups of uroporphyrinogen-III to yield coproporphyrinogen-III. The sequence is that of Uroporphyrinogen decarboxylase from Aliarcobacter butzleri (strain RM4018) (Arcobacter butzleri).